The following is a 141-amino-acid chain: Ribonuclease P protein component (141 aa).

The segment covering Arg114–Glu134 has biased composition (basic and acidic residues). The disordered stretch occupies residues Arg114–Lys141.

Belongs to the RnpA family. As to quaternary structure, consists of a catalytic RNA component (M1 or rnpB) and a protein subunit.

It carries out the reaction Endonucleolytic cleavage of RNA, removing 5'-extranucleotides from tRNA precursor.. Functionally, RNaseP catalyzes the removal of the 5'-leader sequence from pre-tRNA to produce the mature 5'-terminus. It can also cleave other RNA substrates such as 4.5S RNA. The protein component plays an auxiliary but essential role in vivo by binding to the 5'-leader sequence and broadening the substrate specificity of the ribozyme. The protein is Ribonuclease P protein component of Brucella anthropi (strain ATCC 49188 / DSM 6882 / CCUG 24695 / JCM 21032 / LMG 3331 / NBRC 15819 / NCTC 12168 / Alc 37) (Ochrobactrum anthropi).